Here is a 271-residue protein sequence, read N- to C-terminus: Elongation factor Ts (271 aa).

Positions 76 to 79 (TDFV) are involved in Mg(2+) ion dislocation from EF-Tu.

It belongs to the EF-Ts family.

The protein resides in the cytoplasm. Functionally, associates with the EF-Tu.GDP complex and induces the exchange of GDP to GTP. It remains bound to the aminoacyl-tRNA.EF-Tu.GTP complex up to the GTP hydrolysis stage on the ribosome. The chain is Elongation factor Ts from Mycobacterium bovis (strain BCG / Pasteur 1173P2).